A 41-amino-acid polypeptide reads, in one-letter code: Large ribosomal subunit protein bL36 (41 aa).

This sequence belongs to the bacterial ribosomal protein bL36 family.

The polypeptide is Large ribosomal subunit protein bL36 (Rickettsia massiliae (strain Mtu5)).